Consider the following 77-residue polypeptide: MKLMIFTGLVLFAIVSLIEAQAENEKPCLPEYKVRTHAPGNCCSDLVCDCYGRYKSGAQIGRNCFCLQKGVIYKREN.

Positions 1 to 20 (MKLMIFTGLVLFAIVSLIEA) are cleaved as a signal peptide. A propeptide spanning residues 21–26 (QAENEK) is cleaved from the precursor.

This sequence belongs to the neurotoxin 19 (CSTX) family. 08 (U8-Lctx) subfamily. In terms of processing, contains 4 disulfide bonds. Expressed by the venom gland.

It is found in the secreted. The polypeptide is U8-lycotoxin-Ls1l (Lycosa singoriensis (Wolf spider)).